We begin with the raw amino-acid sequence, 575 residues long: Interleukin-1 receptor-like 2 (575 aa).

The signal sequence occupies residues 1 to 19; the sequence is MWSLLLCGLSIALPLSVTA. Ig-like C2-type domains are found at residues 20–111, 126–211, and 222–318; these read DGCK…VNLT, PNLS…VLNG, and YGGS…MCHA. Over 20-335 the chain is Extracellular; the sequence is DGCKDIFMKN…ILQLPAPDFR (316 aa). Residues Asn41, Asn59, Asn109, Asn127, Asn184, Asn234, Asn250, Asn266, and Asn299 are each glycosylated (N-linked (GlcNAc...) asparagine). Cys42 and Cys95 are disulfide-bonded. The cysteines at positions 146 and 195 are disulfide-linked. Residues Cys249 and Cys316 are joined by a disulfide bond. Residues 336-356 traverse the membrane as a helical segment; the sequence is AYLIGGLIALVAVAVSVVYIY. At 357-575 the chain is on the cytoplasmic side; that stretch reads NIFKIDIVLW…RRKKCTLTTG (219 aa). The TIR domain occupies 381–536; sequence KLYDAYVLYP…KFWKTVRYHM (156 aa). The active site involves Glu467.

Belongs to the interleukin-1 receptor family. In terms of assembly, interacts with IL1RAP; the association is enhanced by IL36B indicative for an functional signaling complex and inhibited by IL36RN. Expressed in synovial fibroblasts and articular chondrocytes. Expressed in keratinocytes and monocyte-derived dendritic cells. Expressed in monocytes and myeloid dendritic cells; at protein level.

It is found in the membrane. The catalysed reaction is NAD(+) + H2O = ADP-D-ribose + nicotinamide + H(+). Functionally, receptor for interleukin-36 (IL36A, IL36B and IL36G). After binding to interleukin-36 associates with the coreceptor IL1RAP to form the interleukin-36 receptor complex which mediates interleukin-36-dependent activation of NF-kappa-B, MAPK and other pathways. The IL-36 signaling system is thought to be present in epithelial barriers and to take part in local inflammatory response; it is similar to the IL-1 system. Seems to be involved in skin inflammatory response by induction of the IL-23/IL-17/IL-22 pathway. This Homo sapiens (Human) protein is Interleukin-1 receptor-like 2 (IL1RL2).